The following is a 168-amino-acid chain: Probable chemoreceptor glutamine deamidase CheD (168 aa).

This sequence belongs to the CheD family.

The catalysed reaction is L-glutaminyl-[protein] + H2O = L-glutamyl-[protein] + NH4(+). Probably deamidates glutamine residues to glutamate on methyl-accepting chemotaxis receptors (MCPs), playing an important role in chemotaxis. The sequence is that of Probable chemoreceptor glutamine deamidase CheD from Pseudomonas syringae pv. tomato (strain ATCC BAA-871 / DC3000).